The chain runs to 113 residues: Cysteine proteinase inhibitor 6 (113 aa).

A signal peptide spans 1–18 (MAMTTRTLLLAAVCAAAA). Positions 65-69 (QVVSG) match the Secondary area of contact motif.

This sequence belongs to the cystatin family. Phytocystatin subfamily.

The protein localises to the secreted. Specific inhibitor of cysteine proteinases. Probably involved in the regulation of endogenous processes and in defense against pests and pathogens. The sequence is that of Cysteine proteinase inhibitor 6 from Oryza sativa subsp. japonica (Rice).